Here is a 98-residue protein sequence, read N- to C-terminus: Integration host factor subunit alpha (98 aa).

It belongs to the bacterial histone-like protein family. Heterodimer of an alpha and a beta chain.

In terms of biological role, this protein is one of the two subunits of integration host factor, a specific DNA-binding protein that functions in genetic recombination as well as in transcriptional and translational control. This Marinomonas sp. (strain MWYL1) protein is Integration host factor subunit alpha.